The sequence spans 843 residues: Protein P (843 aa).

The terminal protein domain (TP) stretch occupies residues 1–177 (MPLSYQHFRK…FCGSPYSWEQ (177 aa)). The tract at residues 178-346 (DLQHGRLVFQ…YCLSHIVNLI (169 aa)) is spacer. Residues 219-269 (RKSRLGPQPAQGQLAGRQQGGSGSIRARVHPSPWGTVGVEPSGSGPTHNCA) form a disordered region. The segment covering 223–235 (LGPQPAQGQLAGR) has biased composition (low complexity). Residues 347–690 (EDWGPCTEHG…YLNLYPVARQ (344 aa)) are polymerase/reverse transcriptase domain (RT). The Reverse transcriptase domain maps to 357-600 (EHRIRTPRTP…YSLNFMGYVI (244 aa)). The Mg(2+) site is built by aspartate 429, aspartate 551, and aspartate 552.

Belongs to the hepadnaviridae P protein family.

It catalyses the reaction DNA(n) + a 2'-deoxyribonucleoside 5'-triphosphate = DNA(n+1) + diphosphate. It carries out the reaction Endonucleolytic cleavage to 5'-phosphomonoester.. Its activity is regulated as follows. Activated by host HSP70 and HSP40 in vitro to be able to bind the epsilon loop of the pgRNA. Because deletion of the RNase H region renders the protein partly chaperone-independent, the chaperones may be needed indirectly to relieve occlusion of the RNA-binding site by this domain. Inhibited by several reverse-transcriptase inhibitors: Lamivudine, Adefovir and Entecavir. Its function is as follows. Multifunctional enzyme that converts the viral RNA genome into dsDNA in viral cytoplasmic capsids. This enzyme displays a DNA polymerase activity that can copy either DNA or RNA templates, and a ribonuclease H (RNase H) activity that cleaves the RNA strand of RNA-DNA heteroduplexes in a partially processive 3'- to 5'-endonucleasic mode. Neo-synthesized pregenomic RNA (pgRNA) are encapsidated together with the P protein, and reverse-transcribed inside the nucleocapsid. Initiation of reverse-transcription occurs first by binding the epsilon loop on the pgRNA genome, and is initiated by protein priming, thereby the 5'-end of (-)DNA is covalently linked to P protein. Partial (+)DNA is synthesized from the (-)DNA template and generates the relaxed circular DNA (RC-DNA) genome. After budding and infection, the RC-DNA migrates in the nucleus, and is converted into a plasmid-like covalently closed circular DNA (cccDNA). The activity of P protein does not seem to be necessary for cccDNA generation, and is presumably released from (+)DNA by host nuclear DNA repair machinery. This Hepatitis B virus genotype B2 subtype adw (isolate China/patient4/1996) (HBV-B) protein is Protein P.